A 491-amino-acid polypeptide reads, in one-letter code: MNTQQLAKLRSIVPEMRRVRHIHFVGIGGAGMGGIAEVLANEGYQISGSDLAPNPVTQQLMNLGATIYFNHRPENVRDASVVVVSSAISADNPEIVAAHEARIPVIRRAEMLAELMRFRHGIAIAGTHGKTTTTAMVSSIYAEAGLDPTFVNGGLVKAAGVHARLGHGRYLIAEADESDASFLHLQPMVAIVTNIEADHMDTYQGDFENLKQTFINFLHNLPFYGRAVMCVDDPVIRELLPRVGRQTTTYGFSEDADVRVEDYQQIGPQGHFTLLRQDKEPMRVTLNAPGRHNALNAAAAVAVATEEGIDDEAILRALESFQGTGRRFDFLGEFPLEPVNGKSGTAMLVDDYGHHPTEVDATIKAARAGWPDKNLVMLFQPHRFTRTRDLYDDFANVLTQVDTLLMLEVYPAGEAPIPGADSRSLCRTIRGRGKIDPILVPDPARVAEMLAPVLTGNDLILVQGAGNIGKIARSLAEIKLKPQTPEEEQHD.

126-132 is a binding site for ATP; sequence GTHGKTT.

It belongs to the MurCDEF family.

It localises to the cytoplasm. The enzyme catalyses UDP-N-acetyl-alpha-D-muramate + L-alanine + ATP = UDP-N-acetyl-alpha-D-muramoyl-L-alanine + ADP + phosphate + H(+). The protein operates within cell wall biogenesis; peptidoglycan biosynthesis. Its function is as follows. Cell wall formation. The protein is UDP-N-acetylmuramate--L-alanine ligase of Escherichia coli (strain K12 / MC4100 / BW2952).